The following is a 492-amino-acid chain: Chitooligosaccharide oxidase (492 aa).

The N-terminal stretch at 1–19 (MHFNTLTCVLVGLVAHTSA) is a signal peptide. One can recognise an FAD-binding PCMH-type domain in the interval 57 to 229 (LPFEPAAIAV…VELEFQTFAA (173 aa)). A cross-link (6-(S-cysteinyl)-8alpha-(pros-histidyl)-FAD (His-Cys)) is located at residues 94-154 (HSYTSLGFGG…GKRALAHGTC (61 aa)).

The protein belongs to the oxygen-dependent FAD-linked oxidoreductase family. The cofactor is FAD. Post-translationally, the FAD cofactor is bound via a bicovalent 6-S-cysteinyl, 8alpha-N1-histidyl FAD linkage.

It is found in the secreted. It carries out the reaction N,N'-diacetylchitobiose + O2 = N,N'-diacetylchitobiono-1,5-lactone + H2O2. The catalysed reaction is N,N',N''-triacetylchitotriose + O2 = N,N',N''-triacetylchitotriono-1,5-lactone + H2O2. It catalyses the reaction N,N',N'',N'''-tetraacetylchitotetraose + O2 = N,N',N'',N'''-tetraacetylchitotetraono-1,5-lactone + H2O2. In terms of biological role, catalyzes the selective oxidation of C1 hydroxyl moieties on chitooligosaccharides with concomitant reduction of molecular oxygen to hydrogen peroxide. This results in the formation of the corresponding lactones, which typically undergo spontaneous hydrolysis. Chitooligosaccharides are homo- or heterooligomers of N-acetylglucosamine (GlcNAc) and D-glucosamine which are linked through beta-1,4-glycosidic bonds. For optimal substrate binding at least 2 GlcNAc units are needed, and chitooligosaccharide oxidase is most efficient on chitobiose, chitotriose and chitotetraose. This is Chitooligosaccharide oxidase from Gibberella zeae (strain ATCC MYA-4620 / CBS 123657 / FGSC 9075 / NRRL 31084 / PH-1) (Wheat head blight fungus).